The sequence spans 189 residues: Rho-related protein racM (189 aa).

12-19 (GDYGVGKT) provides a ligand contact to GTP. Residues 35-43 (YVPTALDNF) carry the Effector region motif. Residues 60-64 (DTAGG) and 118-121 (TKID) each bind GTP. At cysteine 186 the chain carries Cysteine methyl ester. Cysteine 186 carries S-geranylgeranyl cysteine lipidation. Residues 187-189 (IIL) constitute a propeptide, removed in mature form.

Belongs to the small GTPase superfamily. Rho family.

The protein localises to the cell membrane. This chain is Rho-related protein racM (racM), found in Dictyostelium discoideum (Social amoeba).